Consider the following 180-residue polypeptide: Adenine phosphoribosyltransferase (180 aa).

It belongs to the purine/pyrimidine phosphoribosyltransferase family. As to quaternary structure, homodimer.

Its subcellular location is the cytoplasm. It carries out the reaction AMP + diphosphate = 5-phospho-alpha-D-ribose 1-diphosphate + adenine. It functions in the pathway purine metabolism; AMP biosynthesis via salvage pathway; AMP from adenine: step 1/1. Catalyzes a salvage reaction resulting in the formation of AMP, that is energically less costly than de novo synthesis. The sequence is that of Adenine phosphoribosyltransferase from Sinorhizobium medicae (strain WSM419) (Ensifer medicae).